The following is a 180-amino-acid chain: Large ribosomal subunit protein uL6 (180 aa).

The protein belongs to the universal ribosomal protein uL6 family. As to quaternary structure, part of the 50S ribosomal subunit.

In terms of biological role, this protein binds to the 23S rRNA, and is important in its secondary structure. It is located near the subunit interface in the base of the L7/L12 stalk, and near the tRNA binding site of the peptidyltransferase center. This is Large ribosomal subunit protein uL6 from Clostridium beijerinckii (strain ATCC 51743 / NCIMB 8052) (Clostridium acetobutylicum).